The chain runs to 177 residues: T-cell receptor beta chain C region (177 aa).

Positions 1 to 150 (EDLANVSAPQ…GVLSATVLYE (150 aa)) are c region. N-linked (GlcNAc...) asparagine glycans are attached at residues Asn5 and Asn22. An intrachain disulfide couples Cys31 to Cys96. A helical transmembrane segment spans residues 146–168 (TVLYEILLGKATLYAVLVSALVL). Residues 169–177 (MAMVKRKDS) are Cytoplasmic-facing.

Its subcellular location is the membrane. This chain is T-cell receptor beta chain C region, found in Oryctolagus cuniculus (Rabbit).